Consider the following 344-residue polypeptide: AA9 family lytic polysaccharide monooxygenase D (344 aa).

The N-terminal stretch at M1–A23 is a signal peptide. Position 24 (H24) interacts with Cu(2+). C70 and C193 are disulfide-bonded. H179 contacts O2. Y190 is a Cu(2+) binding site. Residues N201 and N207 are each glycosylated (N-linked (GlcNAc...) asparagine). The interval P240–N321 is disordered. The segment covering S259–T292 has biased composition (low complexity). The segment covering A311–A320 has biased composition (polar residues). A glycan (N-linked (GlcNAc...) asparagine) is linked at N317.

This sequence belongs to the polysaccharide monooxygenase AA9 family. It depends on Cu(2+) as a cofactor.

Its subcellular location is the secreted. It carries out the reaction [(1-&gt;4)-beta-D-glucosyl]n+m + reduced acceptor + O2 = 4-dehydro-beta-D-glucosyl-[(1-&gt;4)-beta-D-glucosyl]n-1 + [(1-&gt;4)-beta-D-glucosyl]m + acceptor + H2O.. Functionally, lytic polysaccharide monooxygenase (LPMO) that depolymerizes crystalline and amorphous polysaccharides via the oxidation of scissile alpha- or beta-(1-4)-glycosidic bonds, yielding C1 or C4 oxidation products. Catalysis by LPMOs requires the reduction of the active-site copper from Cu(II) to Cu(I) by a reducing agent and H(2)O(2) or O(2) as a cosubstrate. The protein is AA9 family lytic polysaccharide monooxygenase D of Gloeophyllum trabeum (strain ATCC 11539 / FP-39264 / Madison 617) (Brown rot fungus).